A 237-amino-acid chain; its full sequence is MRKLTLAFAAASLLFTLNSAVVARASTPQPLWVGTNVAQLAEQAPIHWVSVAQIENSLLGRPPMAVGFDIDDTVLFSSPGFWRGQKTFSPGSEDYLKNPQFWEKMNNGWDEFSMPKEVARQLIAMHVKRGDSIWFVTGRSQTKTETVSKTLQDDFLIPAANMNPVIFAGDKPGQNTKTQWLQAKQIKVFYGDSDNDITAAREAGARGIRVLRAANSSYKPLPMAGALGEEVIVNSEY.

The first 25 residues, 1 to 25 (MRKLTLAFAAASLLFTLNSAVVARA), serve as a signal peptide directing secretion. The active-site Nucleophile is Asp69. Residues Asp69 and Asp71 each contribute to the Mg(2+) site. Asp71 serves as the catalytic Proton donor. Substrate is bound by residues 137–138 (TG) and Lys177. Asp192 serves as a coordination point for Mg(2+).

The protein belongs to the class B bacterial acid phosphatase family. As to quaternary structure, homotetramer. Mg(2+) serves as cofactor.

It is found in the periplasm. The enzyme catalyses a phosphate monoester + H2O = an alcohol + phosphate. Dephosphorylates several organic phosphate monoesters. Also has a phosphotransferase activity catalyzing the transfer of low-energy phosphate groups from organic phosphate monoesters to free hydroxyl groups of various organic compounds. This Klebsiella pneumoniae (strain 342) protein is Class B acid phosphatase.